The following is a 403-amino-acid chain: JmjC domain-containing histone demethylation protein 1 (403 aa).

Residues 141–328 (WSLREWCNYF…QQLKIVDVEK (188 aa)) enclose the JmjC domain. Residue Thr221 participates in substrate binding. Positions 224 and 226 each coordinate Fe cation. A substrate-binding site is contributed by Lys241. His296 serves as a coordination point for Fe cation.

It belongs to the JHDM1 histone demethylase family. Fe(2+) is required as a cofactor.

The protein localises to the nucleus. The enzyme catalyses N(6),N(6)-dimethyl-L-lysyl(36)-[histone H3] + 2 2-oxoglutarate + 2 O2 = L-lysyl(36)-[histone H3] + 2 formaldehyde + 2 succinate + 2 CO2. In terms of biological role, histone demethylase that specifically demethylates 'Lys-36' of histone H3, thereby playing a central role in histone code. The polypeptide is JmjC domain-containing histone demethylation protein 1 (JHD1) (Candida glabrata (strain ATCC 2001 / BCRC 20586 / JCM 3761 / NBRC 0622 / NRRL Y-65 / CBS 138) (Yeast)).